Consider the following 171-residue polypeptide: Large ribosomal subunit protein uL10 (171 aa).

This sequence belongs to the universal ribosomal protein uL10 family. Part of the ribosomal stalk of the 50S ribosomal subunit. The N-terminus interacts with L11 and the large rRNA to form the base of the stalk. The C-terminus forms an elongated spine to which L12 dimers bind in a sequential fashion forming a multimeric L10(L12)X complex.

In terms of biological role, forms part of the ribosomal stalk, playing a central role in the interaction of the ribosome with GTP-bound translation factors. This chain is Large ribosomal subunit protein uL10, found in Corynebacterium glutamicum (strain R).